We begin with the raw amino-acid sequence, 140 residues long: L-fucose mutarotase (140 aa).

Catalysis depends on histidine 22, which acts as the Proton donor. Substrate is bound by residues aspartate 30, arginine 107, and 129-131 (YGN).

Belongs to the RbsD / FucU family. FucU mutarotase subfamily. Homodecamer.

The protein resides in the cytoplasm. The catalysed reaction is alpha-L-fucose = beta-L-fucose. Its pathway is carbohydrate metabolism; L-fucose metabolism. In terms of biological role, involved in the anomeric conversion of L-fucose. The protein is L-fucose mutarotase of Salmonella gallinarum (strain 287/91 / NCTC 13346).